Reading from the N-terminus, the 274-residue chain is Diaminopimelate epimerase (274 aa).

Asn-11, Gln-44, and Asn-64 together coordinate substrate. Cys-73 serves as the catalytic Proton donor. Substrate is bound by residues 74 to 75 (GN), Asn-157, Asn-190, and 208 to 209 (ER). Catalysis depends on Cys-217, which acts as the Proton acceptor. 218-219 (GS) is a binding site for substrate.

It belongs to the diaminopimelate epimerase family. As to quaternary structure, homodimer.

The protein localises to the cytoplasm. It carries out the reaction (2S,6S)-2,6-diaminopimelate = meso-2,6-diaminopimelate. It participates in amino-acid biosynthesis; L-lysine biosynthesis via DAP pathway; DL-2,6-diaminopimelate from LL-2,6-diaminopimelate: step 1/1. In terms of biological role, catalyzes the stereoinversion of LL-2,6-diaminopimelate (L,L-DAP) to meso-diaminopimelate (meso-DAP), a precursor of L-lysine and an essential component of the bacterial peptidoglycan. The chain is Diaminopimelate epimerase from Pectobacterium carotovorum subsp. carotovorum (strain PC1).